Reading from the N-terminus, the 267-residue chain is Putative [LysW]-aminoadipate/[LysW]-glutamate kinase (267 aa).

Residues 37–38 (GG), R64, and N169 contribute to the substrate site.

It belongs to the acetylglutamate kinase family. LysZ subfamily.

It localises to the cytoplasm. It carries out the reaction [amino-group carrier protein]-C-terminal-N-(1,4-dicarboxybutan-1-yl)-L-glutamine + ATP = [amino-group carrier protein]-C-terminal-N-(1-carboxy-5-phosphooxy-5-oxopentan-1-yl)-L-glutamine + ADP. It catalyses the reaction [amino-group carrier protein]-C-terminal-gamma-(L-glutamyl)-L-glutamate + ATP = [amino-group carrier protein]-C-terminal-gamma-(5-phospho-L-glutamyl)-L-glutamate + ADP. Its pathway is amino-acid biosynthesis; L-lysine biosynthesis via AAA pathway; L-lysine from L-alpha-aminoadipate (Thermus route): step 2/5. It functions in the pathway amino-acid biosynthesis; L-arginine biosynthesis. Its function is as follows. Involved in both the arginine and lysine biosynthetic pathways. Phosphorylates the LysW-bound precursors glutamate (for arginine biosynthesis), respectively alpha-aminoadipate (for lysine biosynthesis). The polypeptide is Putative [LysW]-aminoadipate/[LysW]-glutamate kinase (Nitrosopumilus maritimus (strain SCM1)).